The sequence spans 113 residues: Protein FPV195 (113 aa).

Belongs to the poxviruses A31 family.

The chain is Protein FPV195 from Vertebrata (FPV).